A 55-amino-acid polypeptide reads, in one-letter code: Large ribosomal subunit protein uL30 (55 aa).

This sequence belongs to the universal ribosomal protein uL30 family. Part of the 50S ribosomal subunit.

Its function is as follows. Binds the 5S and 23S rRNAs. The protein is Large ribosomal subunit protein uL30 of Deinococcus radiodurans (strain ATCC 13939 / DSM 20539 / JCM 16871 / CCUG 27074 / LMG 4051 / NBRC 15346 / NCIMB 9279 / VKM B-1422 / R1).